A 639-amino-acid chain; its full sequence is tRNA-dihydrouridine(47) synthase [NAD(P)(+)]-like (639 aa).

Composition is skewed to polar residues over residues 1 to 19 and 54 to 65; these read MAESDGSNNENGNLDTVTQ and QTCSELSGNDAE. Disordered stretches follow at residues 1-20 and 52-122; these read MAESDGSNNENGNLDTVTQK and DKQT…HSQF. A compositionally biased stretch (basic and acidic residues) spans 66-85; sequence NTVRAEDAAEPEAKRIKLDD. Residues 103-119 show a composition bias toward basic residues; sequence EKKRARGQNKSRPHMKH. 2 consecutive C3H1-type zinc fingers follow at residues 122-152 and 160-190; these read FEENKLCPSVTQECASKCFFGDKCKFLHDVA and EDIRPNCYLYETFGKCIYGVTCRFAKSHLGD. Residues 300–302 and Gln354 contribute to the FMN site; that span reads PLT. Cys385 (proton donor) is an active-site residue. FMN is bound by residues Lys424, His454, 486-488, and 509-510; these read NGD and AR.

The protein belongs to the Dus family. Dus3 subfamily. FMN serves as cofactor.

It carries out the reaction 5,6-dihydrouridine(47) in tRNA + NAD(+) = uridine(47) in tRNA + NADH + H(+). It catalyses the reaction 5,6-dihydrouridine(47) in tRNA + NADP(+) = uridine(47) in tRNA + NADPH + H(+). The catalysed reaction is a 5,6-dihydrouridine in mRNA + NAD(+) = a uridine in mRNA + NADH + H(+). The enzyme catalyses a 5,6-dihydrouridine in mRNA + NADP(+) = a uridine in mRNA + NADPH + H(+). Functionally, catalyzes the synthesis of dihydrouridine, a modified base, in various RNAs, such as tRNAs, mRNAs and some long non-coding RNAs (lncRNAs). Mainly modifies the uridine in position 47 (U47) in the D-loop of most cytoplasmic tRNAs. Also able to mediate the formation of dihydrouridine in some mRNAs, thereby regulating their translation. In Xenopus tropicalis (Western clawed frog), this protein is tRNA-dihydrouridine(47) synthase [NAD(P)(+)]-like (dus3l).